Consider the following 974-residue polypeptide: Bifunctional glutamine synthetase adenylyltransferase/adenylyl-removing enzyme (974 aa).

The interval 1–464 (MKNAFLKTHL…HYAALFENEQ (464 aa)) is adenylyl removase. The tract at residues 468-974 (LEIGNLVFTG…CSIFKQIMKH (507 aa)) is adenylyl transferase.

It belongs to the GlnE family. Mg(2+) is required as a cofactor.

It catalyses the reaction [glutamine synthetase]-O(4)-(5'-adenylyl)-L-tyrosine + phosphate = [glutamine synthetase]-L-tyrosine + ADP. It carries out the reaction [glutamine synthetase]-L-tyrosine + ATP = [glutamine synthetase]-O(4)-(5'-adenylyl)-L-tyrosine + diphosphate. Involved in the regulation of glutamine synthetase GlnA, a key enzyme in the process to assimilate ammonia. When cellular nitrogen levels are high, the C-terminal adenylyl transferase (AT) inactivates GlnA by covalent transfer of an adenylyl group from ATP to specific tyrosine residue of GlnA, thus reducing its activity. Conversely, when nitrogen levels are low, the N-terminal adenylyl removase (AR) activates GlnA by removing the adenylyl group by phosphorolysis, increasing its activity. The regulatory region of GlnE binds the signal transduction protein PII (GlnB) which indicates the nitrogen status of the cell. This chain is Bifunctional glutamine synthetase adenylyltransferase/adenylyl-removing enzyme, found in Bartonella quintana (strain Toulouse) (Rochalimaea quintana).